The primary structure comprises 210 residues: MALLTAKTFSLQFNNKRRVNKPYYPRKALLCYQLTPQNGSTPTRGHLKNKKKDHAEIRFINKIKSMGLDETQCYQVTCYLTWSPCPSCAGELVDFIKAHRHLNLRIFASRLYYHWRPNYQEGLLLLCGSQVPVEVMGLPEFTDCWENFVDHKEPPSFNPSEKLEELDKNSQAIKRRLERIKSRSVDVLENGLRSLQLGPVTPSSSIRNSR.

Residues 4 to 126 (LTAKTFSLQF…PNYQEGLLLL (123 aa)) form the CMP/dCMP-type deaminase domain. Residue H54 coordinates Zn(2+). The active-site Proton donor is E56. Zn(2+) is bound by residues C85 and C88. Residues 182–210 (SRSVDVLENGLRSLQLGPVTPSSSIRNSR) form a necessary and sufficient for localization to the cytoplasm region.

This sequence belongs to the cytidine and deoxycytidylate deaminase family. In terms of assembly, homodimer. Zn(2+) serves as cofactor.

It localises to the cytoplasm. It catalyses the reaction a 2'-deoxycytidine in single-stranded DNA + H2O + H(+) = a 2'-deoxyuridine in single-stranded DNA + NH4(+). Antiviral activity is neutralized by the simian immunodeficiency virus rhesus (SIV-mac) virion infectivity factor (VIF). DNA deaminase (cytidine deaminase) which acts as an inhibitor of retrovirus replication and retrotransposon mobility via deaminase-dependent and -independent mechanisms. Exhibits antiviral activity against vif-deficient HIV-1. After the penetration of retroviral nucleocapsids into target cells of infection and the initiation of reverse transcription, it can induce the conversion of cytosine to uracil in the minus-sense single-strand viral DNA, leading to G-to-A hypermutations in the subsequent plus-strand viral DNA. The resultant detrimental levels of mutations in the proviral genome, along with a deamination-independent mechanism that works prior to the proviral integration, together exert efficient antiretroviral effects in infected target cells. Selectively targets single-stranded DNA and does not deaminate double-stranded DNA or single- or double-stranded RNA. This Macaca mulatta (Rhesus macaque) protein is DNA dC-&gt;dU-editing enzyme APOBEC-3H.